A 62-amino-acid polypeptide reads, in one-letter code: Protein CYSTEINE-RICH TRANSMEMBRANE MODULE 2 (62 aa).

A run of 2 helical transmembrane segments spans residues 23-39 (VAVA…AAFD) and 33-53 (VVAA…LSLI).

Belongs to the CYSTM1 family. Heterodimers. Binds weakly to CYSTM7 and WIH1/CYSTM13. In terms of tissue distribution, mostly expressed in stems, siliques, leaves and flowers and, to a lower extent, in roots.

The protein localises to the cell membrane. It localises to the nucleus. It is found in the secreted. The protein resides in the cell wall. Involved in resistance to abiotic stress. Its function is as follows. Confers resistance to heavy metal ions (e.g. cadmium (CdCl(2)) and copper (CuCl(2))) by chelating them at the plasma membrane of root cells, thus stopping their entry and reducing their accumulation. This Arabidopsis thaliana (Mouse-ear cress) protein is Protein CYSTEINE-RICH TRANSMEMBRANE MODULE 2.